A 467-amino-acid chain; its full sequence is Cysteine--tRNA ligase (467 aa).

Residue cysteine 28 coordinates Zn(2+). Residues 30 to 40 carry the 'HIGH' region motif; it reads ITAYDYSHIGH. Residues cysteine 211, histidine 236, and glutamate 240 each coordinate Zn(2+). A 'KMSKS' region motif is present at residues 268–272; sequence KMSKS. Lysine 271 serves as a coordination point for ATP.

It belongs to the class-I aminoacyl-tRNA synthetase family. Zn(2+) serves as cofactor.

The protein resides in the cytoplasm. It carries out the reaction tRNA(Cys) + L-cysteine + ATP = L-cysteinyl-tRNA(Cys) + AMP + diphosphate. The chain is Cysteine--tRNA ligase (cysS) from Archaeoglobus fulgidus (strain ATCC 49558 / DSM 4304 / JCM 9628 / NBRC 100126 / VC-16).